A 65-amino-acid polypeptide reads, in one-letter code: Large ribosomal subunit protein uL29 (65 aa).

This sequence belongs to the universal ribosomal protein uL29 family.

This chain is Large ribosomal subunit protein uL29, found in Thioalkalivibrio sulfidiphilus (strain HL-EbGR7).